The following is a 342-amino-acid chain: Succinylglutamate desuccinylase (342 aa).

3 residues coordinate Zn(2+): His63, Glu66, and His155. Glu219 is a catalytic residue.

The protein belongs to the AspA/AstE family. Succinylglutamate desuccinylase subfamily. Zn(2+) is required as a cofactor.

The enzyme catalyses N-succinyl-L-glutamate + H2O = L-glutamate + succinate. The protein operates within amino-acid degradation; L-arginine degradation via AST pathway; L-glutamate and succinate from L-arginine: step 5/5. Functionally, transforms N(2)-succinylglutamate into succinate and glutamate. This chain is Succinylglutamate desuccinylase, found in Vibrio vulnificus (strain CMCP6).